The chain runs to 83 residues: Cytochrome b559 subunit alpha (83 aa).

Residues 21 to 35 traverse the membrane as a helical segment; that stretch reads VIHSITIPSLFIAGW. H23 contacts heme.

Belongs to the PsbE/PsbF family. Heterodimer of an alpha subunit and a beta subunit. PSII is composed of 1 copy each of membrane proteins PsbA, PsbB, PsbC, PsbD, PsbE, PsbF, PsbH, PsbI, PsbJ, PsbK, PsbL, PsbM, PsbT, PsbX, PsbY, PsbZ, Psb30/Ycf12, at least 3 peripheral proteins of the oxygen-evolving complex and a large number of cofactors. It forms dimeric complexes. Requires heme b as cofactor.

Its subcellular location is the plastid. It is found in the chloroplast thylakoid membrane. Functionally, this b-type cytochrome is tightly associated with the reaction center of photosystem II (PSII). PSII is a light-driven water:plastoquinone oxidoreductase that uses light energy to abstract electrons from H(2)O, generating O(2) and a proton gradient subsequently used for ATP formation. It consists of a core antenna complex that captures photons, and an electron transfer chain that converts photonic excitation into a charge separation. This is Cytochrome b559 subunit alpha from Chaetosphaeridium globosum (Charophycean green alga).